We begin with the raw amino-acid sequence, 476 residues long: UDP-N-acetylmuramate--L-alanine ligase (476 aa).

ATP is bound at residue glycine 107–threonine 113.

This sequence belongs to the MurCDEF family.

Its subcellular location is the cytoplasm. The catalysed reaction is UDP-N-acetyl-alpha-D-muramate + L-alanine + ATP = UDP-N-acetyl-alpha-D-muramoyl-L-alanine + ADP + phosphate + H(+). The protein operates within cell wall biogenesis; peptidoglycan biosynthesis. In terms of biological role, cell wall formation. This chain is UDP-N-acetylmuramate--L-alanine ligase, found in Roseiflexus castenholzii (strain DSM 13941 / HLO8).